An 878-amino-acid chain; its full sequence is Alanine--tRNA ligase (878 aa).

Residues histidine 567, histidine 571, cysteine 669, and histidine 673 each coordinate Zn(2+).

It belongs to the class-II aminoacyl-tRNA synthetase family. Zn(2+) serves as cofactor.

The protein resides in the cytoplasm. It carries out the reaction tRNA(Ala) + L-alanine + ATP = L-alanyl-tRNA(Ala) + AMP + diphosphate. Its function is as follows. Catalyzes the attachment of alanine to tRNA(Ala) in a two-step reaction: alanine is first activated by ATP to form Ala-AMP and then transferred to the acceptor end of tRNA(Ala). Also edits incorrectly charged Ser-tRNA(Ala) and Gly-tRNA(Ala) via its editing domain. The chain is Alanine--tRNA ligase from Rickettsia massiliae (strain Mtu5).